Reading from the N-terminus, the 227-residue chain is Probable septum site-determining protein MinC (227 aa).

Belongs to the MinC family. In terms of assembly, interacts with MinD and FtsZ.

Its function is as follows. Cell division inhibitor that blocks the formation of polar Z ring septums. Rapidly oscillates between the poles of the cell to destabilize FtsZ filaments that have formed before they mature into polar Z rings. Prevents FtsZ polymerization. This chain is Probable septum site-determining protein MinC, found in Photorhabdus laumondii subsp. laumondii (strain DSM 15139 / CIP 105565 / TT01) (Photorhabdus luminescens subsp. laumondii).